A 1292-amino-acid chain; its full sequence is Putative late blight resistance protein homolog R1C-3 (1292 aa).

2 coiled-coil regions span residues 394 to 414 and 505 to 526; these read DSLA…ESMQ and RMNE…KLLN. The NB-ARC domain occupies 505 to 792; that stretch reads RMNEEIVGFE…SESFVKSCEG (288 aa). Position 538 to 545 (538 to 545) interacts with ATP; that stretch reads GMPGLGKT. LRR repeat units lie at residues 842-865, 920-944, 963-991, 1066-1089, 1094-1113, 1114-1142, and 1163-1187; these read AEEN…VYSH, FKFL…LFYL, LWNL…VWDM, PIRL…CISA, YLEL…TADH, LKHL…MFPQ, and FPNL…FMDI. An HMA domain is found at 1211 to 1278; it reads ETQVEDNQNT…KLRNVAYADE (68 aa).

It belongs to the disease resistance NB-LRR family.

Its subcellular location is the cytoplasm. It is found in the membrane. Functionally, confers resistance to late blight (Phytophthora infestans) races carrying the avirulence gene Avr1. Resistance proteins guard the plant against pathogens that contain an appropriate avirulence protein via an indirect interaction with this avirulence protein. That triggers a defense system including the hypersensitive response, which restricts the pathogen growth. The protein is Putative late blight resistance protein homolog R1C-3 (R1C-3) of Solanum demissum (Wild potato).